A 392-amino-acid polypeptide reads, in one-letter code: Pyoverdine export membrane fusion protein PvdR (392 aa).

The tat-type signal signal peptide spans 1–36 (MRRSTHTRRRLLLGGLGLLGLGSLLAWTSLPFGAQP). Residues 109–181 (IDNLKAQLAE…NASLRSDEAE (73 aa)) adopt a coiled-coil conformation. A disordered region spans residues 267-286 (PPKPLDQTSQGGGSPASATA).

Belongs to the membrane fusion protein (MFP) (TC 8.A.1) family. Part of the tripartite efflux system PvdRT-OpmQ, which is composed of an inner membrane component with both ATPase and permease domains, PvdT, a periplasmic membrane fusion protein, PvdR, and an outer membrane component, OpmQ. Post-translationally, predicted to be exported by the Tat system. The position of the signal peptide cleavage has not been experimentally proven.

The protein localises to the periplasm. Part of the tripartite efflux system PvdRT-OpmQ required for the secretion into the extracellular milieu of the siderophore pyoverdine (PVD), which is involved in iron acquisition. This subunit is an adapter protein that stimulates the ATPase activity of PvdT and connects the inner and outer membrane components. The system is responsible for export of newly synthesized PVD after the final steps of biosynthesis have taken place in the periplasm. It is also responsible for recycling of PVD after internalization of ferri-PVD into the periplasm by the outer-membrane receptor FpvA and release of iron from PVD, thus making PVD available for new cycles of iron uptake. Contributes to resistance against ampicillin. The polypeptide is Pyoverdine export membrane fusion protein PvdR (Pseudomonas putida (strain ATCC 47054 / DSM 6125 / CFBP 8728 / NCIMB 11950 / KT2440)).